The following is a 188-amino-acid chain: MSATETKYVPRLYKKYKEEVVPILQKKFNYKSPMQIPRLQKIVVNMGVGEAVQDIRQLERAVEDLRAITGQQPVITRARKSEAGFKLRKGMPIGCKVTLRKERMWDFLDKLISVALPRVKDFKGLSPRSFDGRGNYAFGIAEQIVFPEIDYDKVDRIRGMDIIINTTAETDEEAFWLLSLLGLPIRSM.

Belongs to the universal ribosomal protein uL5 family. Part of the 50S ribosomal subunit; part of the 5S rRNA/L5/L18/L25 subcomplex. Contacts the 5S rRNA and the P site tRNA. Forms a bridge to the 30S subunit in the 70S ribosome.

Its function is as follows. This is one of the proteins that bind and probably mediate the attachment of the 5S RNA into the large ribosomal subunit, where it forms part of the central protuberance. In the 70S ribosome it contacts protein S13 of the 30S subunit (bridge B1b), connecting the 2 subunits; this bridge is implicated in subunit movement. Contacts the P site tRNA; the 5S rRNA and some of its associated proteins might help stabilize positioning of ribosome-bound tRNAs. This Aquifex aeolicus (strain VF5) protein is Large ribosomal subunit protein uL5.